Reading from the N-terminus, the 219-residue chain is Interleukin-12 subunit alpha (219 aa).

The first 22 residues, 1–22, serve as a signal peptide directing secretion; sequence MCPARSLLLVATLVLLDYLSLA. N-linked (GlcNAc...) asparagine glycans are attached at residues N24 and N93. 3 disulfides stabilise this stretch: C37–C110, C64–C196, and C85–C123.

This sequence belongs to the IL-6 superfamily. In terms of assembly, heterodimer with IL12B; disulfide-linked. This heterodimer is known as interleukin IL-12. Heterodimer with EBI3/IL27B; not disulfide-linked. This heterodimer is known as interleukin IL-35. Interacts with NBR1; this interaction promotes IL-12 secretion.

It localises to the secreted. Heterodimerizes with IL12B to form the IL-12 cytokine or with EBI3/IL27B to form the IL-35 cytokine. IL-12 is primarily produced by professional antigen-presenting cells (APCs) such as B-cells and dendritic cells (DCs) as well as macrophages and granulocytes and regulates T-cell and natural killer-cell responses, induces the production of interferon-gamma (IFN-gamma), favors the differentiation of T-helper 1 (Th1) cells and is an important link between innate resistance and adaptive immunity. Mechanistically, exerts its biological effects through a receptor composed of IL12R1 and IL12R2 subunits. Binding to the receptor results in the rapid tyrosine phosphorylation of a number of cellular substrates including the JAK family kinases TYK2 and JAK2. In turn, recruited STAT4 gets phosphorylated and translocates to the nucleus where it regulates cytokine/growth factor responsive genes. As part of IL-35, plays essential roles in maintaining the immune homeostasis of the liver microenvironment and also functions as an immune-suppressive cytokine. Mediates biological events through unconventional receptors composed of IL12RB2 and gp130/IL6ST heterodimers or homodimers. Signaling requires the transcription factors STAT1 and STAT4, which form a unique heterodimer that binds to distinct DNA sites. The polypeptide is Interleukin-12 subunit alpha (IL12A) (Papio anubis (Olive baboon)).